Reading from the N-terminus, the 266-residue chain is Ribonuclease 3 (266 aa).

Positions 34–158 (IERCQEILGY…VIAALYIDGG (125 aa)) constitute an RNase III domain. Position 72 (glutamate 72) interacts with Mg(2+). Aspartate 76 is an active-site residue. 2 residues coordinate Mg(2+): aspartate 144 and glutamate 147. Residue glutamate 147 is part of the active site. Residues 185–254 (NHKSVLQQFA…AANALAELHN (70 aa)) form the DRBM domain.

It belongs to the ribonuclease III family. In terms of assembly, homodimer. Mg(2+) serves as cofactor.

It is found in the cytoplasm. The catalysed reaction is Endonucleolytic cleavage to 5'-phosphomonoester.. Digests double-stranded RNA. Involved in the processing of primary rRNA transcript to yield the immediate precursors to the large and small rRNAs (23S and 16S). Processes some mRNAs, and tRNAs when they are encoded in the rRNA operon. Processes pre-crRNA and tracrRNA of type II CRISPR loci if present in the organism. The protein is Ribonuclease 3 of Rhodopirellula baltica (strain DSM 10527 / NCIMB 13988 / SH1).